The chain runs to 58 residues: Large ribosomal subunit protein uL30 (58 aa).

The protein belongs to the universal ribosomal protein uL30 family. As to quaternary structure, part of the 50S ribosomal subunit.

The sequence is that of Large ribosomal subunit protein uL30 from Pseudomonas putida (strain W619).